The following is a 955-amino-acid chain: Disintegrin and metalloproteinase domain-containing protein 19 (955 aa).

An N-terminal signal peptide occupies residues 1-25 (MPGGAGAARLCLLAFALQPLRPRAA). Residues 26 to 202 (REPGWTRGSE…QTKKRPRRMK (177 aa)) constitute a propeptide that is removed on maturation. The short motif at 130–137 (STCRGIRG) is the Cysteine switch element. A Zn(2+)-binding site is contributed by Cys-132. Asn-144 is a glycosylation site (N-linked (GlcNAc...) asparagine). Residues 203–699 (REDLNSMKYV…IDSGPMPPES (497 aa)) lie on the Extracellular side of the membrane. Residues 210–408 (KYVELYLVAD…GGGMCLSNMP (199 aa)) form the Peptidase M12B domain. 3 disulfide bridges follow: Cys-320–Cys-403, Cys-360–Cys-387, and Cys-361–Cys-370. His-345 lines the Zn(2+) pocket. Glu-346 is a catalytic residue. Zn(2+) contacts are provided by His-349 and His-355. Positions 416-502 (GRRCGNGYLE…HCPTNFYQMD (87 aa)) constitute a Disintegrin domain. Residues Asn-444 and Asn-447 are each glycosylated (N-linked (GlcNAc...) asparagine). Cys-474 and Cys-494 are disulfide-bonded. N-linked (GlcNAc...) asparagine glycosylation occurs at Asn-645. Residues 650–682 (ETEGCGKKCNGHGVCNNNQNCHCLPGWAPPFCN) form the EGF-like domain. 3 cysteine pairs are disulfide-bonded: Cys-654–Cys-664, Cys-658–Cys-670, and Cys-672–Cys-681. The chain crosses the membrane as a helical span at residues 700 to 720 (VGPVVAGVLVAILVLAVLMLM). Residues 721-955 (YYCCRQNNKL…AKHSCFLVPA (235 aa)) lie on the Cytoplasmic side of the membrane. Residues 753–771 (SQNSGTGHANPTFKLQTPQ) show a composition bias toward polar residues. Residues 753–917 (SQNSGTGHAN…LKVKAGTRGL (165 aa)) are disordered. Pro residues-rich tracts occupy residues 787-796 (SQPPPRPPPD) and 833-844 (RPPPSRPIPPAP). An SH3-binding motif is present at residues 833-844 (RPPPSRPIPPAP).

In terms of assembly, interacts with SH3PXD2A. Zn(2+) serves as cofactor. The precursor is cleaved by a furin endopeptidase. In terms of tissue distribution, expressed in many normal organ tissues and several cancer cell lines.

The protein resides in the membrane. Functionally, participates in the proteolytic processing of beta-type neuregulin isoforms which are involved in neurogenesis and synaptogenesis, suggesting a regulatory role in glial cell. Also cleaves alpha-2 macroglobulin. May be involved in osteoblast differentiation and/or osteoblast activity in bone. This chain is Disintegrin and metalloproteinase domain-containing protein 19 (ADAM19), found in Homo sapiens (Human).